The following is a 497-amino-acid chain: Cobyric acid synthase (497 aa).

One can recognise a GATase cobBQ-type domain in the interval 251-443 (DLKIGVVWYP…LHGLFDNDFF (193 aa)). The active-site Nucleophile is the C333. H435 is an active-site residue.

The protein belongs to the CobB/CobQ family. CobQ subfamily.

Its pathway is cofactor biosynthesis; adenosylcobalamin biosynthesis. Catalyzes amidations at positions B, D, E, and G on adenosylcobyrinic A,C-diamide. NH(2) groups are provided by glutamine, and one molecule of ATP is hydrogenolyzed for each amidation. The protein is Cobyric acid synthase of Carboxydothermus hydrogenoformans (strain ATCC BAA-161 / DSM 6008 / Z-2901).